The primary structure comprises 295 residues: Alpha-ketoglutarate-dependent sulfate ester dioxygenase (295 aa).

Position 71 (His-71) interacts with substrate. 2 residues coordinate Fe cation: His-98 and Asp-100. Residue Val-101 participates in substrate binding. Position 125 (Thr-125) interacts with 2-oxoglutarate. Residue His-252 coordinates Fe cation. Residues Arg-263 and Arg-267 each contribute to the 2-oxoglutarate site.

This sequence belongs to the TfdA dioxygenase family. It depends on Fe(2+) as a cofactor.

It catalyses the reaction a primary linear alkyl sulfate ester + 2-oxoglutarate + O2 = an aldehyde + sulfate + succinate + CO2 + H(+). The enzyme catalyses 2-ethylhexyl sulfate + 2-oxoglutarate + O2 = 2-ethylhexanal + sulfate + succinate + CO2 + H(+). The catalysed reaction is hexyl sulfate + 2-oxoglutarate + O2 = hexanal + sulfate + succinate + CO2 + H(+). It carries out the reaction pentyl sulfate + 2-oxoglutarate + O2 = pentanal + sulfate + succinate + CO2 + H(+). It catalyses the reaction heptyl sulfate + 2-oxoglutarate + O2 = heptanal + sulfate + succinate + CO2 + H(+). In terms of biological role, alpha-ketoglutarate-dependent sulfate ester dioxygenase, which oxidizes medium-chain alkyl-sulfate esters. Shows preference for 2-ethylhexyl sulfate (2-EHS) in vitro, leading to the formation of succinate and 2-ethylhexanal. Has likely a role in sulfate scavenging in vivo. Functionally, also causes the inactivation of the 2-carboxyquinoxaline Ty38c (an antitubercular compound that inhibits DprE1) via oxidative decarboxylation, using Ty38c instead of alpha-ketoglutarate as a substrate. Is thus responsible for primary resistance of M.tuberculosis to Ty38c in vitro. Overexpression of Rv3406 causes resistance to Ty38c. This Mycobacterium tuberculosis (strain ATCC 25618 / H37Rv) protein is Alpha-ketoglutarate-dependent sulfate ester dioxygenase.